The sequence spans 84 residues: Sec-independent protein translocase protein TatA (84 aa).

Residues 1-21 traverse the membrane as a helical segment; that stretch reads MGGISIWQLLIIAVIVILLFG. A disordered region spans residues 40–84; sequence KKAMSDEDKPADKKDADFEPKNIEQQKTEASAETTAETKKDKEQA. Basic and acidic residues-rich tracts occupy residues 42–66 and 75–84; these read AMSD…EQQK and AETKKDKEQA.

Belongs to the TatA/E family. In terms of assembly, the Tat system comprises two distinct complexes: a TatABC complex, containing multiple copies of TatA, TatB and TatC subunits, and a separate TatA complex, containing only TatA subunits. Substrates initially bind to the TatABC complex, which probably triggers association of the separate TatA complex to form the active translocon.

Its subcellular location is the cell inner membrane. In terms of biological role, part of the twin-arginine translocation (Tat) system that transports large folded proteins containing a characteristic twin-arginine motif in their signal peptide across membranes. TatA could form the protein-conducting channel of the Tat system. This Vibrio atlanticus (strain LGP32) (Vibrio splendidus (strain Mel32)) protein is Sec-independent protein translocase protein TatA.